Consider the following 507-residue polypeptide: AMSH-like ubiquitin thioesterase 3 (507 aa).

Positions 73–107 (QERLGSRKRLRAVINELESLKPEFNQLVDKLNRVE) form a coiled coil. 2 disordered regions span residues 133-162 (HKASYSRPDINKPLPTSQPSWTYNNNLTSS) and 214-242 (PSNTDWGSADNSGLIEAGPSSSSASLNGD). Composition is skewed to polar residues over residues 146-162 (LPTSQPSWTYNNNLTSS), 214-224 (PSNTDWGSADN), and 232-242 (PSSSSASLNGD). An MPN domain is found at 333-463 (LHVPVRIMDD…IFHLSDPSGV (131 aa)). Zn(2+) is bound by residues histidine 411, histidine 413, aspartate 424, histidine 426, cysteine 469, histidine 475, and histidine 477. A JAMM motif motif is present at residues 411–424 (HTHPTQTCFMSSVD).

This sequence belongs to the peptidase M67C family. As to quaternary structure, interacts with PATL1 and PATL2. May also bind to HSC70-1, HSC70-3, VHA-A, BGLU23 and EPSIN1. Interacts with BRO1/ALIX. It depends on Zn(2+) as a cofactor.

It localises to the membrane. The protein resides in the cytoplasm. The protein localises to the vacuole membrane. Its subcellular location is the late endosome. Functionally, zinc metalloprotease that cleaves 'Lys-48'- and 'Lys-63'-linked polyubiquitin chains, but is not implicated in protein degradation by the 26S proteasome, deneddylation, or desumoylation. Required for intracellular trafficking (e.g. trafficking from the Golgi to the vacuole and the vacuolar trafficking of endocytosed cargo), endocytosis and vacuole biogenesis. This Arabidopsis thaliana (Mouse-ear cress) protein is AMSH-like ubiquitin thioesterase 3 (AMSH3).